We begin with the raw amino-acid sequence, 406 residues long: uncharacterized protein (406 aa).

The interval Met1–Gly36 is disordered.

The protein to yeast YMR316w.

This is an uncharacterized protein from Saccharomyces cerevisiae (strain ATCC 204508 / S288c) (Baker's yeast).